Consider the following 124-residue polypeptide: Small ribosomal subunit protein uS12 (124 aa).

Residues methionine 1–glycine 32 form a disordered region. Aspartate 89 carries the 3-methylthioaspartic acid modification. A disordered region spans residues glutamine 105–lysine 124. Over residues glutamine 111–lysine 124 the composition is skewed to basic residues.

Belongs to the universal ribosomal protein uS12 family. As to quaternary structure, part of the 30S ribosomal subunit. Contacts proteins S8 and S17. May interact with IF1 in the 30S initiation complex.

Its function is as follows. With S4 and S5 plays an important role in translational accuracy. Interacts with and stabilizes bases of the 16S rRNA that are involved in tRNA selection in the A site and with the mRNA backbone. Located at the interface of the 30S and 50S subunits, it traverses the body of the 30S subunit contacting proteins on the other side and probably holding the rRNA structure together. The combined cluster of proteins S8, S12 and S17 appears to hold together the shoulder and platform of the 30S subunit. In Beutenbergia cavernae (strain ATCC BAA-8 / DSM 12333 / CCUG 43141 / JCM 11478 / NBRC 16432 / NCIMB 13614 / HKI 0122), this protein is Small ribosomal subunit protein uS12.